A 281-amino-acid polypeptide reads, in one-letter code: uncharacterized protein (281 aa).

A helical transmembrane segment spans residues 5 to 27; that stretch reads AYVTVIYGNNIYLTGALVLGYTL.

It localises to the membrane. This is an uncharacterized protein from Acanthamoeba polyphaga mimivirus (APMV).